The sequence spans 874 residues: MKEEAFLRRRFSLCPPASTPQKTDPRKVPRNLLLGCENELGPITPGRDMESNGPSQPRDEEPQTPGSATKVPLAEYRLCNGSDKECTSPTTRVSKKDALKAQKENYRQEKKRATKQLFSALTDPSVVIMADSLKIRGTLKSWTKLWCVLKPGVLLIYKTPKVGQWVGTVLLHCCELIERPSKKDGFCFKLFHPLDQSVWAVKGPKGESVGSITQPLPSSYLIFRAASESDGRCWLDALELALRCSSLLRLSTCKQGRDGEQGSSPDASPSSLYGLPTSATIPDQDLFPLNGSALENDAFSDKSERENAEDSDAETQDHSRKTNESGSDLLDSPGGPWRGTTYVEQVQEELGELDETSQVETVSEENKSLMWVLLRQLRPGMDLSRVVLPTFVLEPRSFLGKLSDYYYHGDLLSRAAAEDDPYCRMKLVLRWYLSGFYKKPKGIKKPYNPILGETFRCRWLHPQTNSHTFYIAEQVSHHPPVSAFYVSNRKDGFCMSGSITAKSKFYGNSLSALLDGKAKLTFLNRKEEYTLTMPYAHCRGILYGTMTMELGGKVNIECEKNNLQAELDFKLKPFFGSSANINQISGKIMSGEEVLARLTGHWDRDVFIKEESSGGTELFWTPSEEVRRQRLKRHTVLLEEQSELESERLWQHVTRAIREGDQHKATQEKSVLEEAQRQRAREHQQSLTPWKPQLFLLDPLTQEWRYRYEDLSPWDPLKDIAQYEQDGILHTLQRETMSGQTTFLGSPDSRHKRPSSDRRLRKASDQPSGHSQVTESSGSTPESCPDLSDEDFVPGGESPCPRCRREVHRLKMLQEAVLSIQEAQQELHRHLSTMLSSTVRAGQAPAPSLLQNPRSWFLLCIFLTCQLFINYILK.

Residues 1-71 form a disordered region; it reads MKEEAFLRRR…PQTPGSATKV (71 aa). At serine 12 the chain carries Phosphoserine. The stretch at 93–123 forms a coiled coil; the sequence is VSKKDALKAQKENYRQEKKRATKQLFSALTD. The region spanning 126–243 is the PH domain; that stretch reads VVIMADSLKI…WLDALELALR (118 aa). Disordered regions lie at residues 255–277 and 299–338; these read QGRD…GLPT and FSDK…GPWR. The segment covering 261-277 has biased composition (polar residues); it reads QGSSPDASPSSLYGLPT. Residues 299–308 are compositionally biased toward basic and acidic residues; that stretch reads FSDKSERENA. A 1,2-diacyl-sn-glycero-3-phospho-(1D-myo-inositol 4-phosphate) is bound by residues 383–388, 445–448, and 477–478; these read LSRVVL, KPYN, and HH. A 1,2-diacyl-sn-glycero-3-phospho-L-serine is bound by residues 383-388 and asparagine 448; that span reads LSRVVL. Residue serine 503 participates in a 1,2-diacyl-sn-glycero-3-phospho-L-serine binding. Basic and acidic residues predominate over residues 660 to 684; it reads GDQHKATQEKSVLEEAQRQRAREHQ. Disordered regions lie at residues 660–685 and 739–798; these read GDQH…EHQQ and GQTT…GGES. Residues lysine 669, glutamate 673, and arginine 677 each contribute to the a 1,2-diacyl-sn-glycero-3-phospho-(1D-myo-inositol 4-phosphate) site. 2 positions are modified to phosphoserine: serine 746 and serine 749. A compositionally biased stretch (basic and acidic residues) spans 754–764; it reads PSSDRRLRKAS. Residues 765 to 782 are compositionally biased toward polar residues; sequence DQPSGHSQVTESSGSTPE. Residues 855–873 form a helical membrane-spanning segment; it reads SWFLLCIFLTCQLFINYIL.

This sequence belongs to the OSBP family.

Its subcellular location is the endoplasmic reticulum membrane. In terms of biological role, lipid transporter involved in lipid countertransport between the endoplasmic reticulum and the plasma membrane: specifically exchanges phosphatidylserine with phosphatidylinositol 4-phosphate (PI4P), delivering phosphatidylserine to the plasma membrane in exchange for PI4P, which is degraded by the SAC1/SACM1L phosphatase in the endoplasmic reticulum. Binds phosphatidylserine and PI4P in a mutually exclusive manner. May cooperate with NPC1 to mediate the exit of cholesterol from endosomes/lysosomes. Binds 25-hydroxycholesterol and cholesterol. In Mus musculus (Mouse), this protein is Oxysterol-binding protein-related protein 5 (Osbpl5).